The primary structure comprises 48 residues: Delta-actitoxin-Bgr2b (48 aa).

3 disulfide bridges follow: Cys4–Cys45, Cys6–Cys35, and Cys28–Cys46.

Belongs to the sea anemone sodium channel inhibitory toxin family. Type I subfamily.

The protein localises to the secreted. It is found in the nematocyst. Binds voltage-dependently at site 3 of sodium channels (Nav) and inhibits the inactivation of the activated channels, thereby blocking neuronal transmission. Has effect on SCN4A/SCN1B, and SCN5A/SCN1B, has no effect on SCN2A/SCN1B, and SCN10A/SCN1B. Possesses the highest efficacy for the insect sodium channel para/tipE. Also interacts with sodium channels in cardiac cells. Shows lethality to crabs. The chain is Delta-actitoxin-Bgr2b from Bunodosoma granuliferum (Red warty sea anemone).